The following is a 269-amino-acid chain: MPILTTHLLQDVIEIAQQAGEHLRCFYQRSVTVRMKEDNTPVTEADLFVSQFLTEKLTALTPQIPILSEENCHIPLTERQTWRSYWLIDPLDGTQQFINRTGQFSVLVSLVKDHQPVLGVIHAPMLGSTYYAMQGFGAYKHHDGQHLKLAFHDIQADNALRIAVGSAAAAEKVRSILNKNLAYEFHICGSSGLKSTLVADGVCDCYIRLGCTGEWDTAASEILLAEMGGIIFDLNYQPLTYNKRESFVNPNFVMGITQDFPWDKIFHSN.

Residues Glu69, Asp89, Leu91, Asp92, and Asp216 each contribute to the Mg(2+) site. Glu69 contacts substrate. Substrate-binding positions include Leu91–Thr94 and Asp216.

Belongs to the inositol monophosphatase superfamily. CysQ family. Mg(2+) is required as a cofactor.

Its subcellular location is the cell inner membrane. The enzyme catalyses adenosine 3',5'-bisphosphate + H2O = AMP + phosphate. Its function is as follows. Converts adenosine-3',5'-bisphosphate (PAP) to AMP. The polypeptide is 3'(2'),5'-bisphosphate nucleotidase CysQ (Aggregatibacter actinomycetemcomitans (Actinobacillus actinomycetemcomitans)).